The following is a 136-amino-acid chain: MSLIKEFKAFASRGNVIDMAVGIIIGAAFGKIVSSFVADVIMPPIGIILGGVNFSDLSIVLQAAQGDAPSVVIAYGKFIQTVIDFTIIAFAIFMGLKAINTLKRKEEEAPKAPPTPTKEEELLSEIRDLLKAQQEK.

2 helical membrane passes run 9–29 and 79–99; these read AFASRGNVIDMAVGIIIGAAF and IQTVIDFTIIAFAIFMGLKAI.

Belongs to the MscL family. Homopentamer.

Its subcellular location is the cell inner membrane. Channel that opens in response to stretch forces in the membrane lipid bilayer. May participate in the regulation of osmotic pressure changes within the cell. The chain is Large-conductance mechanosensitive channel from Shewanella sp. (strain W3-18-1).